A 95-amino-acid chain; its full sequence is MIHPPQKNSDEGTLFLSSNLFAPPKIPSNPRTPVLLAFYRIVNITQNHTANKKRNIFSTHSLKAQTKHYKFEISWYIFLHEFSTNCIFMIEFQLS.

This is an uncharacterized protein from Bacillus subtilis (strain 168).